The chain runs to 80 residues: Bowman-Birk type proteinase inhibitor (80 aa).

7 cysteine pairs are disulfide-bonded: cysteine 19–cysteine 70, cysteine 20–cysteine 35, cysteine 23–cysteine 66, cysteine 25–cysteine 33, cysteine 41–cysteine 47, cysteine 44–cysteine 59, and cysteine 49–cysteine 57.

In terms of assembly, occurs as a monomer, dimer or trimer. The dimer may be the active form. Binds calcium, probably through His-3 to His-6.

Functionally, protease inhibitor with activity against cysteine, aspartic and serine proteases. Highest activity against serine proteases, in particular trypsin and trypsin-like proteases. The chain is Bowman-Birk type proteinase inhibitor from Phaseolus acutifolius (Tepary bean).